A 1556-amino-acid polypeptide reads, in one-letter code: Pentafunctional AROM polypeptide (1556 aa).

A 3-dehydroquinate synthase region spans residues 1–387 (MFAEGQIQKV…HEQKASSVAD (387 aa)). NAD(+) is bound by residues 46–48 (DTN), 84–87 (ETSK), 115–117 (GGV), and Asp-120. Arg-131 provides a ligand contact to 7-phospho-2-dehydro-3-deoxy-D-arabino-heptonate. An NAD(+)-binding site is contributed by 140 to 141 (TT). 7-phospho-2-dehydro-3-deoxy-D-arabino-heptonate-binding residues include Asp-147 and Lys-153. Lys-162 is an NAD(+) binding site. Residue Asn-163 coordinates 7-phospho-2-dehydro-3-deoxy-D-arabino-heptonate. NAD(+)-binding positions include 180-183 (FLET) and Asn-191. Glu-195 contacts Zn(2+). Residues 195 to 198 (EVIK) and Lys-253 contribute to the 7-phospho-2-dehydro-3-deoxy-D-arabino-heptonate site. Glu-263 serves as the catalytic Proton acceptor; for 3-dehydroquinate synthase activity. 7-phospho-2-dehydro-3-deoxy-D-arabino-heptonate contacts are provided by residues 267 to 271 (RNLLN) and His-274. Residue His-274 coordinates Zn(2+). The Proton acceptor; for 3-dehydroquinate synthase activity role is filled by His-278. 7-phospho-2-dehydro-3-deoxy-D-arabino-heptonate-binding residues include His-290 and Lys-359. His-290 is a Zn(2+) binding site. The interval 400–837 (VGEAPVGDKK…WDVLSGVFNV (438 aa)) is EPSP synthase. Cys-819 serves as the catalytic For EPSP synthase activity. The shikimate kinase stretch occupies residues 858–1049 (PSIFIVGMRG…HKDQFTSFLS (192 aa)). 864–871 (GMRGAGKT) serves as a coordination point for ATP. Residues 1050-1266 (LTFPDVSIAA…AAPGQLSVEE (217 aa)) are 3-dehydroquinase. The active-site Proton acceptor; for 3-dehydroquinate dehydratase activity is His-1171. Residue Lys-1200 is the Schiff-base intermediate with substrate; for 3-dehydroquinate dehydratase activity of the active site. Residues 1279-1556 (KNLSFFIVGT…EVGEKAVLGN (278 aa)) are shikimate dehydrogenase.

The protein in the N-terminal section; belongs to the sugar phosphate cyclases superfamily. Dehydroquinate synthase family. This sequence in the 2nd section; belongs to the EPSP synthase family. In the 3rd section; belongs to the shikimate kinase family. It in the 4th section; belongs to the type-I 3-dehydroquinase family. The protein in the C-terminal section; belongs to the shikimate dehydrogenase family. In terms of assembly, homodimer. The cofactor is Zn(2+).

The protein localises to the cytoplasm. The enzyme catalyses 7-phospho-2-dehydro-3-deoxy-D-arabino-heptonate = 3-dehydroquinate + phosphate. It carries out the reaction 3-dehydroquinate = 3-dehydroshikimate + H2O. The catalysed reaction is shikimate + NADP(+) = 3-dehydroshikimate + NADPH + H(+). It catalyses the reaction shikimate + ATP = 3-phosphoshikimate + ADP + H(+). The enzyme catalyses 3-phosphoshikimate + phosphoenolpyruvate = 5-O-(1-carboxyvinyl)-3-phosphoshikimate + phosphate. It functions in the pathway metabolic intermediate biosynthesis; chorismate biosynthesis; chorismate from D-erythrose 4-phosphate and phosphoenolpyruvate: step 2/7. It participates in metabolic intermediate biosynthesis; chorismate biosynthesis; chorismate from D-erythrose 4-phosphate and phosphoenolpyruvate: step 3/7. Its pathway is metabolic intermediate biosynthesis; chorismate biosynthesis; chorismate from D-erythrose 4-phosphate and phosphoenolpyruvate: step 4/7. The protein operates within metabolic intermediate biosynthesis; chorismate biosynthesis; chorismate from D-erythrose 4-phosphate and phosphoenolpyruvate: step 5/7. It functions in the pathway metabolic intermediate biosynthesis; chorismate biosynthesis; chorismate from D-erythrose 4-phosphate and phosphoenolpyruvate: step 6/7. Its function is as follows. The AROM polypeptide catalyzes 5 consecutive enzymatic reactions in prechorismate polyaromatic amino acid biosynthesis. This is Pentafunctional AROM polypeptide from Yarrowia lipolytica (strain CLIB 122 / E 150) (Yeast).